The following is a 137-amino-acid chain: Large ribosomal subunit protein uL16 (137 aa).

Belongs to the universal ribosomal protein uL16 family. Part of the 50S ribosomal subunit.

In terms of biological role, binds 23S rRNA and is also seen to make contacts with the A and possibly P site tRNAs. This chain is Large ribosomal subunit protein uL16, found in Bradyrhizobium sp. (strain BTAi1 / ATCC BAA-1182).